A 497-amino-acid polypeptide reads, in one-letter code: Angiopoietin-1 (497 aa).

A signal peptide spans 1–19 (MTVFLSFAFFAAILTHIGC). Residues 81 to 119 (QKLQHLEHVMENYTQWLQKLENYIVENMKSEMAQIQQNA) are a coiled coil. Asparagine 92, asparagine 122, asparagine 154, asparagine 243, and asparagine 294 each carry an N-linked (GlcNAc...) asparagine glycan. A coiled-coil region spans residues 153-261 (LNQTSRLEIQ…LELMDTVHNL (109 aa)). The region spanning 276–496 (REEEKPFRDC…STTMMIRPLD (221 aa)) is the Fibrinogen C-terminal domain. 2 cysteine pairs are disulfide-bonded: cysteine 285–cysteine 314 and cysteine 438–cysteine 451.

As to quaternary structure, homooligomer. Interacts with TEK/TIE2. Interacts with SVEP1/polydom. Interacts with THBD; this interaction significantly inhibits the generation of activated PC and TAFIa/CPB2 by the thrombin/thrombomodulin complex.

Its subcellular location is the secreted. In terms of biological role, binds and activates TIE2 receptor by inducing its tyrosine phosphorylation. Implicated in endothelial developmental processes later and distinct from that of VEGF. Appears to play a crucial role in mediating reciprocal interactions between the endothelium and surrounding matrix and mesenchyme. Mediates blood vessel maturation/stability. It may play an important role in the heart early development. This chain is Angiopoietin-1 (Angpt1), found in Rattus norvegicus (Rat).